We begin with the raw amino-acid sequence, 445 residues long: 8-amino-7-oxononanoate synthase (445 aa).

Residue R40 participates in substrate binding. G131–Y132 lines the pyridoxal 5'-phosphate pocket. H156 contacts substrate. Residues S202, H230, and T258 each contribute to the pyridoxal 5'-phosphate site. K261 carries the N6-(pyridoxal phosphate)lysine modification. T377 lines the substrate pocket. Residues A408–A445 form a disordered region.

It belongs to the class-II pyridoxal-phosphate-dependent aminotransferase family. BioF subfamily. In terms of assembly, homodimer. The cofactor is pyridoxal 5'-phosphate.

It carries out the reaction 6-carboxyhexanoyl-[ACP] + L-alanine + H(+) = (8S)-8-amino-7-oxononanoate + holo-[ACP] + CO2. It functions in the pathway cofactor biosynthesis; biotin biosynthesis. Catalyzes the decarboxylative condensation of pimeloyl-[acyl-carrier protein] and L-alanine to produce 8-amino-7-oxononanoate (AON), [acyl-carrier protein], and carbon dioxide. This is 8-amino-7-oxononanoate synthase from Burkholderia ambifaria (strain MC40-6).